The primary structure comprises 169 residues: Large ribosomal subunit protein uL10 (169 aa).

Belongs to the universal ribosomal protein uL10 family. In terms of assembly, part of the ribosomal stalk of the 50S ribosomal subunit. The N-terminus interacts with L11 and the large rRNA to form the base of the stalk. The C-terminus forms an elongated spine to which L12 dimers bind in a sequential fashion forming a multimeric L10(L12)X complex.

Forms part of the ribosomal stalk, playing a central role in the interaction of the ribosome with GTP-bound translation factors. The polypeptide is Large ribosomal subunit protein uL10 (Staphylococcus saprophyticus subsp. saprophyticus (strain ATCC 15305 / DSM 20229 / NCIMB 8711 / NCTC 7292 / S-41)).